The following is a 747-amino-acid chain: DNA topoisomerase 4 subunit A (747 aa).

Residues 35–498 (LPFIGDGLKP…EAKMISESDM (464 aa)) enclose the Topo IIA-type catalytic domain. Tyrosine 124 acts as the O-(5'-phospho-DNA)-tyrosine intermediate in catalysis.

It belongs to the type II topoisomerase GyrA/ParC subunit family. ParC type 1 subfamily. As to quaternary structure, heterotetramer composed of ParC and ParE.

It is found in the cell membrane. It carries out the reaction ATP-dependent breakage, passage and rejoining of double-stranded DNA.. Its function is as follows. Topoisomerase IV is essential for chromosome segregation. It relaxes supercoiled DNA. Performs the decatenation events required during the replication of a circular DNA molecule. The protein is DNA topoisomerase 4 subunit A of Haemophilus influenzae (strain ATCC 51907 / DSM 11121 / KW20 / Rd).